The chain runs to 129 residues: ALK and LTK ligand 1 (129 aa).

The N-terminal stretch at Met-1–Gly-27 is a signal peptide. The segment at Gly-24 to Ala-63 is disordered. Residues Ala-25–Ala-35 show a composition bias toward basic residues. 2 cysteine pairs are disulfide-bonded: Cys-90/Cys-126 and Cys-104/Cys-113.

The protein belongs to the ALKAL family. Widely expressed with highest levels in thyroid and moderate levels in stomach, trachea, small intestine, prostate and brain.

Its subcellular location is the secreted. The protein localises to the cell membrane. In terms of biological role, cytokine that acts as a physiological ligand for receptor tyrosine kinase LTK, leading to its activation. Monomeric ALKAL1 binds to LTK, leading to LTK homodimerization and activation. In contrast to ALKAL2, does not act as a potent physiological ligand for ALK. The protein is ALK and LTK ligand 1 of Homo sapiens (Human).